The following is a 117-amino-acid chain: Large ribosomal subunit protein bL19 (117 aa).

The protein belongs to the bacterial ribosomal protein bL19 family.

Its function is as follows. This protein is located at the 30S-50S ribosomal subunit interface and may play a role in the structure and function of the aminoacyl-tRNA binding site. This is Large ribosomal subunit protein bL19 from Sorangium cellulosum (strain So ce56) (Polyangium cellulosum (strain So ce56)).